The sequence spans 564 residues: Mitochondrial distribution and morphology protein 34 (564 aa).

One can recognise an SMP-LTD domain in the interval Met1–Glu208. 5 disordered regions span residues Glu208–Asn240, Ser336–Thr397, Gln404–Asp423, Arg434–Gln517, and Ile532–His564. Polar residues predominate over residues Ser209–Pro219. The span at Ser351–Arg365 shows a compositional bias: basic residues. Basic and acidic residues predominate over residues Val366–Asp376. Residues Ser380–Glu390 are compositionally biased toward low complexity. Composition is skewed to polar residues over residues Gly438 to Ser462 and Pro477 to Ile503.

The protein belongs to the MDM34 family. In terms of assembly, component of the ER-mitochondria encounter structure (ERMES) or MDM complex, composed of mmm1, mdm10, mdm12 and mdm34.

The protein resides in the mitochondrion outer membrane. In terms of biological role, component of the ERMES/MDM complex, which serves as a molecular tether to connect the endoplasmic reticulum (ER) and mitochondria. Components of this complex are involved in the control of mitochondrial shape and protein biogenesis, and function in nonvesicular lipid trafficking between the ER and mitochondria. Mdm34 is required for the interaction of the ER-resident membrane protein mmm1 and the outer mitochondrial membrane-resident beta-barrel protein mdm10. This is Mitochondrial distribution and morphology protein 34 from Talaromyces stipitatus (strain ATCC 10500 / CBS 375.48 / QM 6759 / NRRL 1006) (Penicillium stipitatum).